Here is a 213-residue protein sequence, read N- to C-terminus: Alkylbase DNA glycosidase-like protein mag2 (213 aa).

DNA contacts are provided by K53, L54, S61, H91, G94, S96, K97, K99, E102, K137, G138, K140, T143, S163, and T164.

The protein belongs to the alkylbase DNA glycosidase AlkA family.

It localises to the nucleus. Functionally, alkylbase DNA glycosidase-like protein that shows no DNA glycosylase activity for alkylated bases. The molecular role of mag2 appears to be abasic (AP) site recognition and protection, while possibly facilitating damage signaling by structurally sculpting the DNA substrate. Stimulates AP site binding to mismatch repair protein mutS. In Schizosaccharomyces pombe (strain 972 / ATCC 24843) (Fission yeast), this protein is Alkylbase DNA glycosidase-like protein mag2.